We begin with the raw amino-acid sequence, 941 residues long: Isoleucine--tRNA ligase (941 aa).

The 'HIGH' region motif lies at 58 to 68 (PYANGDIHIGH). Glu-562 is a binding site for L-isoleucyl-5'-AMP. Residues 603-607 (KMSKS) carry the 'KMSKS' region motif. Lys-606 serves as a coordination point for ATP. Zn(2+) is bound by residues Cys-904, Cys-907, Cys-924, and Cys-927.

The protein belongs to the class-I aminoacyl-tRNA synthetase family. IleS type 1 subfamily. As to quaternary structure, monomer. Zn(2+) is required as a cofactor.

It localises to the cytoplasm. It carries out the reaction tRNA(Ile) + L-isoleucine + ATP = L-isoleucyl-tRNA(Ile) + AMP + diphosphate. Its function is as follows. Catalyzes the attachment of isoleucine to tRNA(Ile). As IleRS can inadvertently accommodate and process structurally similar amino acids such as valine, to avoid such errors it has two additional distinct tRNA(Ile)-dependent editing activities. One activity is designated as 'pretransfer' editing and involves the hydrolysis of activated Val-AMP. The other activity is designated 'posttransfer' editing and involves deacylation of mischarged Val-tRNA(Ile). The chain is Isoleucine--tRNA ligase from Alkalilimnicola ehrlichii (strain ATCC BAA-1101 / DSM 17681 / MLHE-1).